We begin with the raw amino-acid sequence, 1056 residues long: Potassium transporter TRK1 (1056 aa).

Topologically, residues 1–46 (MLYRVSGFYKRHTRNFTNIDYGYYIRNFIHHIASKIYPYAKVVLPN) are cytoplasmic. Residues 47 to 67 (FRAAHYFYILTLVILGSILVY) traverse the membrane as a helical segment. At 68-73 (PVKTCA) the chain is on the extracellular side. The stretch at 74–90 (YIDVLFFTAGASTQAGL) is an intramembrane region. At 91 to 99 (NTVNVNDLS) the chain is on the extracellular side. Residues 100–122 (LYQQIVLYLLATLATPIFIHGSL) traverse the membrane as a helical segment. Residues 123–622 (LFVRLYYFER…LGGIEYRAVK (500 aa)) are Cytoplasmic-facing. Disordered stretches follow at residues 180-276 (REAE…IDPE), 290-350 (KNQE…EDED), and 404-571 (PWTS…SIEN). Positions 186–203 (SSSSPQSSSSQTSQPVST) are enriched in low complexity. A compositionally biased stretch (basic and acidic residues) spans 236-245 (EKIHFEEPQR). Positions 335-344 (PATNSVGTGN) are enriched in polar residues. A compositionally biased stretch (low complexity) spans 412 to 423 (TLSNSSKKGSLS). Composition is skewed to acidic residues over residues 428-449 (DTED…SDIS) and 469-487 (YEED…DDGE). Polar residues predominate over residues 521 to 533 (RSNTLDTPQQNTS). Residues 537 to 549 (KIRKKAPKRKTPR) are compositionally biased toward basic residues. Polar residues predominate over residues 553–563 (NASFNQHSNVS). The chain crosses the membrane as a helical span at residues 623–646 (LLIKIIVVYYVGFNIIPGVMLSIW). The Extracellular segment spans residues 647 to 665 (IYCMPHYKNLMISSSISPA). An intramembrane segment occupies 666 to 682 (WWAFFTSQSSFNDLGLT). Residues 683 to 693 (LTSNSMMSFNQ) lie on the Extracellular side of the membrane. The chain crosses the membrane as a helical span at residues 694-710 (NAFVQILCSFLIVIGNT). The Cytoplasmic portion of the chain corresponds to 711-754 (GFPILLRFIIWVMFKTARPLSLYKESLGFLLDHPRRCFTLLFPS). The chain crosses the membrane as a helical span at residues 755–778 (VPTWWLFFILVVLNGFDLVIFCIL). Topologically, residues 779–793 (DLHDDTFKGVDMGYR) are extracellular. Residues 794-810 (VLNGLFQAFCTRTVGFS) lie within the membrane without spanning it. Topologically, residues 811 to 817 (VMDLSQL) are extracellular. The chain crosses the membrane as a helical span at residues 818-841 (HAATQVSYLIMMYISVLPIAISVR). The Cytoplasmic portion of the chain corresponds to 842 to 874 (RTNVYEEQSLGVYAKENAEGVDESAPSNYVGSH). The chain crosses the membrane as a helical span at residues 875–896 (LRNQLSYDLWYICLGLFIICIA). The Extracellular portion of the chain corresponds to 897–909 (EGKRLKEQDLRFS). Residues 910-928 (IFAVLFEIVSAYGTVGMSM) lie within the membrane without spanning it. Residues 929-942 (GYPGVDCSLSGEFN) lie on the Extracellular side of the membrane. The helical transmembrane segment at 943-965 (VISKLVIIAMMIRGRHRGLPYTI) threads the bilayer. Topologically, residues 966–1056 (DRAIMLPNAA…RYVVRTVSEV (91 aa)) are cytoplasmic.

It belongs to the TrkH potassium transport family.

The protein localises to the cell membrane. The catalysed reaction is K(+)(in) = K(+)(out). The enzyme catalyses chloride(in) = chloride(out). Its activity is regulated as follows. TRK1-mediated chloride conductance is blocked by 4,4'-diisothiocyanatostilbene-2,2'-disulfonic acid. Its function is as follows. Potassium transporter that mediates K(+) influx, as well as Cl(-) efflux as a secondary function. TRK1 is the major K(+) uptake transporter that regulates membrane potential and intracellular pH. The TRK1-mediated Cl(-) efflux should serve as a Cl(-) detoxification route and may play a role in sustaining C.albicans on mammalian epithelial surfaces, or in physiological saline solutions such as saliva. In terms of biological role, mediates candidacidal activities of cysteine-free peptides, but not of defensins. The hallmark of salivary gland-secreted histatin-5 (Hst 5) killing of C.albicans is the rapid efflux of cellular ATP and other small nucleotides and ions from the cell as well as concurrent intracellular uptake of propidium iodide (PI). TRK1 is the channel for Hst 5-induced killing and histatin-5 may directly or indirectly alter TRK1 function, allowing the efflux of larger anions, including ATP, and the influx of small cationic dyes, such as PI. In Candida albicans (strain SC5314 / ATCC MYA-2876) (Yeast), this protein is Potassium transporter TRK1.